The primary structure comprises 306 residues: Ornithine carbamoyltransferase (306 aa).

Residues 53 to 56, glutamine 80, arginine 104, and 131 to 134 contribute to the carbamoyl phosphate site; these read STRT and HPCQ. Residues asparagine 162, aspartate 219, and 223-224 each bind L-ornithine; that span reads SM. Residues 259 to 260 and arginine 287 each bind carbamoyl phosphate; that span reads CL.

It belongs to the aspartate/ornithine carbamoyltransferase superfamily. OTCase family.

The protein resides in the cytoplasm. The catalysed reaction is carbamoyl phosphate + L-ornithine = L-citrulline + phosphate + H(+). It participates in amino-acid biosynthesis; L-arginine biosynthesis; L-arginine from L-ornithine and carbamoyl phosphate: step 1/3. Its function is as follows. Reversibly catalyzes the transfer of the carbamoyl group from carbamoyl phosphate (CP) to the N(epsilon) atom of ornithine (ORN) to produce L-citrulline. This is Ornithine carbamoyltransferase from Acinetobacter baylyi (strain ATCC 33305 / BD413 / ADP1).